A 132-amino-acid chain; its full sequence is Small ribosomal subunit protein uS8 (132 aa).

Belongs to the universal ribosomal protein uS8 family. As to quaternary structure, part of the 30S ribosomal subunit. Contacts proteins S5 and S12.

In terms of biological role, one of the primary rRNA binding proteins, it binds directly to 16S rRNA central domain where it helps coordinate assembly of the platform of the 30S subunit. This Bacillus subtilis (strain 168) protein is Small ribosomal subunit protein uS8.